The following is a 259-amino-acid chain: Sugar fermentation stimulation protein homolog (259 aa).

The protein belongs to the SfsA family.

The sequence is that of Sugar fermentation stimulation protein homolog from Prochlorococcus marinus (strain MIT 9303).